Consider the following 121-residue polypeptide: Large ribosomal subunit protein bL21c (121 aa).

The protein belongs to the bacterial ribosomal protein bL21 family. As to quaternary structure, part of the 50S ribosomal subunit.

The protein localises to the plastid. It localises to the chloroplast. Functionally, this protein binds to 23S rRNA. This is Large ribosomal subunit protein bL21c from Huperzia lucidula (Shining clubmoss).